A 489-amino-acid polypeptide reads, in one-letter code: Homoserine O-acetyltransferase (489 aa).

The AB hydrolase-1 domain occupies 69 to 438; that stretch reads LLLCHALSGS…AEGHDGFLLE (370 aa). Serine 163 (nucleophile) is an active-site residue. Positions 255–329 are disordered; that stretch reads ASRHPYPDRL…QTTDSSSLNQ (75 aa). Basic and acidic residues predominate over residues 280-290; it reads EGNRNRRERPC. The span at 299–329 shows a compositional bias: low complexity; sequence SESALNSPASSVSSLPSLGASQTTDSSSLNQ. Catalysis depends on residues aspartate 403 and histidine 432.

The protein belongs to the AB hydrolase superfamily. MetX family.

It is found in the cytoplasm. The enzyme catalyses L-homoserine + acetyl-CoA = O-acetyl-L-homoserine + CoA. The protein operates within amino-acid biosynthesis; L-methionine biosynthesis via de novo pathway; O-acetyl-L-homoserine from L-homoserine: step 1/1. Commits homoserine to the methionine biosynthesis pathway by catalyzing its O-acetylation. The polypeptide is Homoserine O-acetyltransferase (met6) (Schizosaccharomyces pombe (strain 972 / ATCC 24843) (Fission yeast)).